A 63-amino-acid chain; its full sequence is Large ribosomal subunit protein uL29 (63 aa).

Belongs to the universal ribosomal protein uL29 family.

This is Large ribosomal subunit protein uL29 from Shewanella pealeana (strain ATCC 700345 / ANG-SQ1).